The following is a 457-amino-acid chain: Methylenetetrahydrofolate--tRNA-(uracil-5-)-methyltransferase TrmFO (457 aa).

Position 7–12 (7–12 (GAGLAG)) interacts with FAD. The interval 38–58 (FTSRQDEKTGTHDVRNATQTR) is disordered. Basic and acidic residues predominate over residues 40-52 (SRQDEKTGTHDVR).

Belongs to the MnmG family. TrmFO subfamily. FAD serves as cofactor.

It localises to the cytoplasm. The catalysed reaction is uridine(54) in tRNA + (6R)-5,10-methylene-5,6,7,8-tetrahydrofolate + NADH + H(+) = 5-methyluridine(54) in tRNA + (6S)-5,6,7,8-tetrahydrofolate + NAD(+). It carries out the reaction uridine(54) in tRNA + (6R)-5,10-methylene-5,6,7,8-tetrahydrofolate + NADPH + H(+) = 5-methyluridine(54) in tRNA + (6S)-5,6,7,8-tetrahydrofolate + NADP(+). In terms of biological role, catalyzes the folate-dependent formation of 5-methyl-uridine at position 54 (M-5-U54) in all tRNAs. In Hydrogenobaculum sp. (strain Y04AAS1), this protein is Methylenetetrahydrofolate--tRNA-(uracil-5-)-methyltransferase TrmFO.